Here is a 203-residue protein sequence, read N- to C-terminus: Cytochrome c biogenesis ATP-binding export protein CcmA (203 aa).

In terms of domain architecture, ABC transporter spans 2-203 (LEALDLAGVR…KTSQTVRMGA (202 aa)). 34–41 (GENGSGKT) lines the ATP pocket.

The protein belongs to the ABC transporter superfamily. CcmA exporter (TC 3.A.1.107) family. In terms of assembly, the complex is composed of two ATP-binding proteins (CcmA) and two transmembrane proteins (CcmB).

The protein localises to the cell inner membrane. It catalyses the reaction heme b(in) + ATP + H2O = heme b(out) + ADP + phosphate + H(+). In terms of biological role, part of the ABC transporter complex CcmAB involved in the biogenesis of c-type cytochromes; once thought to export heme, this seems not to be the case, but its exact role is uncertain. Responsible for energy coupling to the transport system. In Pseudomonas aeruginosa, this protein is Cytochrome c biogenesis ATP-binding export protein CcmA.